The following is a 119-amino-acid chain: Large ribosomal subunit protein bL20 (119 aa).

The protein belongs to the bacterial ribosomal protein bL20 family.

Its function is as follows. Binds directly to 23S ribosomal RNA and is necessary for the in vitro assembly process of the 50S ribosomal subunit. It is not involved in the protein synthesizing functions of that subunit. The chain is Large ribosomal subunit protein bL20 from Thiobacillus denitrificans (strain ATCC 25259 / T1).